The chain runs to 78 residues: Small ribosomal subunit protein bS20 (78 aa).

The protein belongs to the bacterial ribosomal protein bS20 family.

Its function is as follows. Binds directly to 16S ribosomal RNA. This is Small ribosomal subunit protein bS20 from Streptococcus thermophilus (strain ATCC BAA-491 / LMD-9).